A 577-amino-acid polypeptide reads, in one-letter code: Pentatricopeptide repeat-containing protein At1g63400 (577 aa).

PPR repeat units follow at residues 49-83 (GSGD…RPLP), 84-118 (SIFE…GISH), 119-153 (NLYT…GYEP), 154-188 (SIVT…GYRP), 189-223 (DTIT…GCQP), 224-258 (NLVT…KIEA), 259-293 (NVVI…GVRP), 294-328 (NVIT…KINP), 329-363 (NVVT…SIDP), 364-398 (DIFT…DCFP), 399-433 (NVVT…GLVG), 434-468 (NTVT…GVHP), 469-503 (NIMT…KMEP), 504-538 (TIYT…GVKP), and 539-573 (DVII…GPLP).

It belongs to the PPR family. P subfamily.

The polypeptide is Pentatricopeptide repeat-containing protein At1g63400 (Arabidopsis thaliana (Mouse-ear cress)).